Consider the following 290-residue polypeptide: 4-hydroxybenzoate octaprenyltransferase (290 aa).

Helical transmembrane passes span 24–44, 48–68, 98–118, 142–162, 171–191, 214–234, 239–259, and 270–290; these read IGFFLLLWPTLWGLWLSHKGI, VVLIVFVAGALCMRSAGCIIN, LVALSILLFIAFILVLSLNFI, FPQVMLGLLFSWPILMAFTAI, WLLFLMNTVWTIVYDTQYAMI, FLIGILQLCIVFILGIIGWKE, VFYFFSLFGVIILFMWQQILI, and AFLSNNYVGMLVFIGIASSFH.

The protein belongs to the UbiA prenyltransferase family. The cofactor is Mg(2+).

The protein resides in the cell inner membrane. It carries out the reaction all-trans-octaprenyl diphosphate + 4-hydroxybenzoate = 4-hydroxy-3-(all-trans-octaprenyl)benzoate + diphosphate. It functions in the pathway cofactor biosynthesis; ubiquinone biosynthesis. Its function is as follows. Catalyzes the prenylation of para-hydroxybenzoate (PHB) with an all-trans polyprenyl group. Mediates the second step in the final reaction sequence of ubiquinone-8 (UQ-8) biosynthesis, which is the condensation of the polyisoprenoid side chain with PHB, generating the first membrane-bound Q intermediate 3-octaprenyl-4-hydroxybenzoate. The protein is 4-hydroxybenzoate octaprenyltransferase of Blochmanniella pennsylvanica (strain BPEN).